Reading from the N-terminus, the 183-residue chain is dCTP deaminase (183 aa).

DCTP contacts are provided by residues 106 to 111 (KSTYAR), 130 to 132 (TLE), glutamine 151, tyrosine 165, and glutamine 175. The Proton donor/acceptor role is filled by glutamate 132.

Belongs to the dCTP deaminase family. As to quaternary structure, homotrimer.

The enzyme catalyses dCTP + H2O + H(+) = dUTP + NH4(+). It functions in the pathway pyrimidine metabolism; dUMP biosynthesis; dUMP from dCTP (dUTP route): step 1/2. Catalyzes the deamination of dCTP to dUTP. This Acidobacterium capsulatum (strain ATCC 51196 / DSM 11244 / BCRC 80197 / JCM 7670 / NBRC 15755 / NCIMB 13165 / 161) protein is dCTP deaminase.